The primary structure comprises 520 residues: MNQQVIIFDTTLRDGEQALQASLCVNEKLQIALALERMGVDIMEVGFPVSSPGDFESVQTIAKQIKNSRVCALARCVEKDIDVAAEALKVADAFRIHVFLATSDLHIESKLKKTFENVMEMATQSIKRARRYTDDVEFSCEDAGRTPIDNLCRIVENAIKAGATTINIPDTVGYTTPYQFGGIITNLIERVPNIDKAIISVHCHDDLGMSVANSITAVQSGARQIEGTINGLGERAGNCSLEEVIMAIKVRQQMLGVYTNINHQEIYRTSQLVSQLCNMPIPANKAIVGSNAFSHSSGIHQDGVLKNRETYEIMTPESIGLKEIQLNLTSRSGRAAVKHRMEEMGYQDKDYDLGSLYEAFLRLADKKGQVFDYDLEALAFINLQQQEPEFFHLDNFNIQSGSNVMATAAVCLVCGKELKSEAATGNGPVDAVYQAISRITEYPIELVSYQLSGKGQGKNALGQVNIVVECFGRRFHGMGLETDIVESSAKAMVHALNCVWRTEQVKKEKQRIQQNTKEMV.

Residues 5–267 form the Pyruvate carboxyltransferase domain; that stretch reads VIIFDTTLRD…YTNINHQEIY (263 aa). Asp14, His202, His204, and Asn238 together coordinate Mn(2+). Residues 392–520 form a regulatory domain region; it reads HLDNFNIQSG…RIQQNTKEMV (129 aa).

This sequence belongs to the alpha-IPM synthase/homocitrate synthase family. LeuA type 1 subfamily. Homodimer. It depends on Mn(2+) as a cofactor.

The protein resides in the cytoplasm. The enzyme catalyses 3-methyl-2-oxobutanoate + acetyl-CoA + H2O = (2S)-2-isopropylmalate + CoA + H(+). It functions in the pathway amino-acid biosynthesis; L-leucine biosynthesis; L-leucine from 3-methyl-2-oxobutanoate: step 1/4. In terms of biological role, catalyzes the condensation of the acetyl group of acetyl-CoA with 3-methyl-2-oxobutanoate (2-ketoisovalerate) to form 3-carboxy-3-hydroxy-4-methylpentanoate (2-isopropylmalate). The sequence is that of 2-isopropylmalate synthase from Photorhabdus laumondii subsp. laumondii (strain DSM 15139 / CIP 105565 / TT01) (Photorhabdus luminescens subsp. laumondii).